The chain runs to 273 residues: Dermonecrotic toxin LsaSicTox-alphaIB1aiii (273 aa).

Residue histidine 5 is part of the active site. 2 residues coordinate Mg(2+): glutamate 25 and aspartate 27. The Nucleophile role is filled by histidine 41. Intrachain disulfides connect cysteine 45–cysteine 51 and cysteine 47–cysteine 190. Aspartate 85 contacts Mg(2+).

It belongs to the arthropod phospholipase D family. Class II subfamily. The cofactor is Mg(2+). Expressed by the venom gland.

It is found in the secreted. The enzyme catalyses an N-(acyl)-sphingosylphosphocholine = an N-(acyl)-sphingosyl-1,3-cyclic phosphate + choline. The catalysed reaction is an N-(acyl)-sphingosylphosphoethanolamine = an N-(acyl)-sphingosyl-1,3-cyclic phosphate + ethanolamine. It carries out the reaction a 1-acyl-sn-glycero-3-phosphocholine = a 1-acyl-sn-glycero-2,3-cyclic phosphate + choline. It catalyses the reaction a 1-acyl-sn-glycero-3-phosphoethanolamine = a 1-acyl-sn-glycero-2,3-cyclic phosphate + ethanolamine. Functionally, dermonecrotic toxins cleave the phosphodiester linkage between the phosphate and headgroup of certain phospholipids (sphingolipid and lysolipid substrates), forming an alcohol (often choline) and a cyclic phosphate. This toxin acts on sphingomyelin (SM). It may also act on ceramide phosphoethanolamine (CPE), lysophosphatidylcholine (LPC) and lysophosphatidylethanolamine (LPE), but not on lysophosphatidylserine (LPS), and lysophosphatidylglycerol (LPG). It acts by transphosphatidylation, releasing exclusively cyclic phosphate products as second products. Induces dermonecrosis, hemolysis, increased vascular permeability, edema, inflammatory response, and platelet aggregation. This is Dermonecrotic toxin LsaSicTox-alphaIB1aiii from Loxosceles sabina (Tucson recluse spider).